The sequence spans 386 residues: Histidine decarboxylase (386 aa).

His120 provides a ligand contact to substrate. N6-(pyridoxal phosphate)lysine is present on Lys233.

It belongs to the group II decarboxylase family. In terms of assembly, homotetramer. Requires pyridoxal 5'-phosphate as cofactor.

The catalysed reaction is L-histidine + H(+) = histamine + CO2. It participates in siderophore biosynthesis; anguibactin biosynthesis. This is Histidine decarboxylase from Vibrio anguillarum (strain ATCC 68554 / 775) (Listonella anguillarum).